A 189-amino-acid polypeptide reads, in one-letter code: Elongation factor P (189 aa).

This sequence belongs to the elongation factor P family.

Its subcellular location is the cytoplasm. Its pathway is protein biosynthesis; polypeptide chain elongation. Functionally, involved in peptide bond synthesis. Stimulates efficient translation and peptide-bond synthesis on native or reconstituted 70S ribosomes in vitro. Probably functions indirectly by altering the affinity of the ribosome for aminoacyl-tRNA, thus increasing their reactivity as acceptors for peptidyl transferase. The sequence is that of Elongation factor P from Ehrlichia chaffeensis (strain ATCC CRL-10679 / Arkansas).